Reading from the N-terminus, the 663-residue chain is MGPLRESKKEHRVQHHDKEISRSRIPRLILRPHMPQQQHKVSPASESPFSEEESREFNPSSSGRSARTVSSNSFCSDDTGCPSSQSVSPVKTPSDAGNSPIGFCPGSDEGFTRKKCTIGMVGEGSIQSSRYKKESKSGLVKPGSEADFSSSSSTGSISAPEVHMSTAGSKRSSSSRNRGPHGRSNGASSHKPGSSPSSPREKDLLSMLCRNQLSPVNIHPSYAPSSPSSSNSGSYKGSDCSPIMRRSGRYMSCGENHGVRPPNPEQYLTPLQQKEVTVRHLKTKLKESERRLHERESEIVELKSQLARMREDWIEEECHRVEAQLALKEARKEIKQLKQVIETMRSSLADKDKGIQKYFVDINIQNKKLESLLQSMEMAHSGSLRDELCLDFPCDSPEKSLTLNPPLDTMADGLSLEEQVTGEGADRELLVGDSIANSTDLFDEIVTATTTESGDLELVHSTPGANVLELLPIVMGQEEGSVVVERAVQTDVVPYSPAISELIQSVLQKLQDPCPSSLASPDESEPDSMESFPESLSALVVDLTPRNPNSAILLSPVETPYANVDAEVHANRLMRELDFAACVEERLDGVIPLARGGVVRQYWSSSFLVDLLAVAAPVVPTVLWAFSTQRGGTDPVYNIGALLRGCCVVALHSLRRTAFRIKT.

Disordered regions lie at residues 1-202 and 216-267; these read MGPL…PREK and VNIH…PEQY. A sufficient for interaction with KIF5B region spans residues 2-417; it reads GPLRESKKEH…DTMADGLSLE (416 aa). Serine 50 carries the post-translational modification Phosphoserine. The segment covering 57-73 has biased composition (low complexity); that stretch reads FNPSSSGRSARTVSSNS. Residues 81 to 97 are compositionally biased toward polar residues; that stretch reads CPSSQSVSPVKTPSDAG. Serine 107 bears the Phosphoserine mark. Composition is skewed to low complexity over residues 145 to 158, 188 to 198, and 221 to 241; these read EADF…GSIS, SSHKPGSSPSS, and SYAP…SDCS. The stretch at 271–353 forms a coiled coil; the sequence is LQQKEVTVRH…MRSSLADKDK (83 aa). The sufficient for interaction with STX1A stretch occupies residues 310–417; that stretch reads REDWIEEECH…DTMADGLSLE (108 aa). Phosphoserine is present on residues serine 396 and serine 555. The helical transmembrane segment at 606–626 threads the bilayer; that stretch reads SFLVDLLAVAAPVVPTVLWAF.

Interacts with STX1A and KIF5B. In terms of tissue distribution, isoform 3, isoform 4 and isoform 5 are expressed in HeLa cell line (at protein level). Isoform 3 is expressed in fetal and adult brain. Isoform 4 is expressed in numerous fetal tissues (brain, kidney, liver, lung, and thymus) and in adult brain, kidney, liver, lung, pancreas, colon, prostate, small intestine, testis and thymus. Isoform 5 is expressed in fetal brain, brain and small intestine.

It is found in the cytoplasm. The protein localises to the cytoskeleton. Its subcellular location is the cytoplasmic vesicle. It localises to the golgi apparatus membrane. Its function is as follows. Part of a kinesin motor-adapter complex that is critical for the anterograde axonal transport of active zone components and contributes to activity-dependent presynaptic assembly during neuronal development. This Homo sapiens (Human) protein is Syntabulin (SYBU).